The primary structure comprises 282 residues: 3-oxoadipate CoA-transferase subunit A (282 aa).

It belongs to the 3-oxoacid CoA-transferase subunit A family. In terms of assembly, heterotetramer composed of 2 A and 2 B subunits.

The catalysed reaction is 3-oxoadipate + succinyl-CoA = 3-oxoadipyl-CoA + succinate. The protein operates within aromatic compound metabolism; beta-ketoadipate pathway; acetyl-CoA and succinyl-CoA from 3-oxoadipate: step 1/2. Its function is as follows. Catalyzes the CoA transfer from succinate to 3-oxoadipate (beta-ketoadipate). The polypeptide is 3-oxoadipate CoA-transferase subunit A (catI) (Pseudomonas knackmussii (strain DSM 6978 / CCUG 54928 / LMG 23759 / B13)).